Reading from the N-terminus, the 434-residue chain is Ribosomal protein uS12 methylthiotransferase RimO (434 aa).

An MTTase N-terminal domain is found at 6 to 122; that stretch reads NRVFLLSLGC…ILTAIGARYR (117 aa). [4Fe-4S] cluster is bound by residues C15, C51, C85, C146, C150, and C153. One can recognise a Radical SAM core domain in the interval 132-361; that stretch reads TAPGHTSFLK…MELQEGISEE (230 aa). The region spanning 364–431 is the TRAM domain; that stretch reads KRLEGREIAV…PYELFGTVLK (68 aa).

It belongs to the methylthiotransferase family. RimO subfamily. [4Fe-4S] cluster is required as a cofactor.

Its subcellular location is the cytoplasm. The enzyme catalyses L-aspartate(89)-[ribosomal protein uS12]-hydrogen + (sulfur carrier)-SH + AH2 + 2 S-adenosyl-L-methionine = 3-methylsulfanyl-L-aspartate(89)-[ribosomal protein uS12]-hydrogen + (sulfur carrier)-H + 5'-deoxyadenosine + L-methionine + A + S-adenosyl-L-homocysteine + 2 H(+). In terms of biological role, catalyzes the methylthiolation of an aspartic acid residue of ribosomal protein uS12. The chain is Ribosomal protein uS12 methylthiotransferase RimO from Chlorobium phaeovibrioides (strain DSM 265 / 1930) (Prosthecochloris vibrioformis (strain DSM 265)).